Consider the following 78-residue polypeptide: Small ribosomal subunit protein bS18 (78 aa).

Belongs to the bacterial ribosomal protein bS18 family. As to quaternary structure, part of the 30S ribosomal subunit. Forms a tight heterodimer with protein bS6.

Functionally, binds as a heterodimer with protein bS6 to the central domain of the 16S rRNA, where it helps stabilize the platform of the 30S subunit. The sequence is that of Small ribosomal subunit protein bS18 from Limosilactobacillus reuteri (strain DSM 20016) (Lactobacillus reuteri).